Here is a 273-residue protein sequence, read N- to C-terminus: Coiled-coil domain-containing protein 3 (273 aa).

Residues 1-21 (MPLPLLLAALCLAASPAPARA) form the signal peptide. N-linked (GlcNAc...) asparagine glycosylation occurs at Asn100. A coiled-coil region spans residues 188–250 (SVQKALFEEE…VNQKLNEKLG (63 aa)).

As to quaternary structure, homodimer. Post-translationally, N-glycosylated. As to expression, expressed in aorta and adipose tissue. Enriched in mature adipocytes. Over-expressed in adipose tissue from either hormonally-induced or nutritionally-regulated obese mice models.

It is found in the secreted. Functionally, negatively regulates TNF-alpha-induced pro-inflammatory response in endothelial cells (ECs) via inhibition of TNF-alpha-induced NF-kappaB activation in ECs. Positively regulates lipid accumulation in adipose cells. The polypeptide is Coiled-coil domain-containing protein 3 (Ccdc3) (Mus musculus (Mouse)).